A 311-amino-acid chain; its full sequence is Olfactory receptor 4K1 (311 aa).

Topologically, residues methionine 1–leucine 25 are extracellular. Asparagine 5 carries N-linked (GlcNAc...) asparagine glycosylation. A helical membrane pass occupies residues phenylalanine 26 to isoleucine 49. The Cytoplasmic segment spans residues serine 50–serine 57. Residues proline 58–proline 79 traverse the membrane as a helical segment. Topologically, residues lysine 80 to glutamine 100 are extracellular. Residues cysteine 97 and cysteine 189 are joined by a disulfide bond. A helical membrane pass occupies residues isoleucine 101–tyrosine 120. At aspartate 121–arginine 139 the chain is on the cytoplasmic side. The chain crosses the membrane as a helical span at residues leucine 140 to serine 158. Topologically, residues histidine 159–methionine 195 are extracellular. The helical transmembrane segment at glutamate 196–threonine 219 threads the bilayer. Residues isoleucine 220–lysine 235 are Cytoplasmic-facing. The chain crosses the membrane as a helical span at residues alanine 236 to tyrosine 258. The Extracellular portion of the chain corresponds to isoleucine 259–lysine 269. The chain crosses the membrane as a helical span at residues phenylalanine 270–leucine 289. Residues arginine 290–asparagine 311 are Cytoplasmic-facing.

This sequence belongs to the G-protein coupled receptor 1 family.

The protein resides in the cell membrane. Its function is as follows. Odorant receptor. This chain is Olfactory receptor 4K1 (OR4K1), found in Homo sapiens (Human).